Here is a 290-residue protein sequence, read N- to C-terminus: PIH1 domain-containing protein 1 (290 aa).

Phosphoserine is present on residues serine 12, serine 16, and serine 173.

Belongs to the PIH1 family. As to quaternary structure, component of the R2TP complex composed at least of RUVBL1, RUVBL2, RPAP3 and PIHD1. Component of the PAQosome complex which is responsible for the biogenesis of several protein complexes and which consists of R2TP complex members RUVBL1, RUVBL2, RPAP3 and PIH1D1, URI complex members PFDN2, PFDN6, PDRG1, UXT and URI1 as well as ASDURF, POLR2E and DNAAF10/WDR92. Interacts with phosphorylated TELO2 and mediates interaction of TELO2 with the R2TP complex. Interacts with phosphorylated ECD, EFTUD2/SNRP116, RPB1 and UBR5 and with RPB1 in a phosphorylation-independent manner. Interacts with the core C/D box snoRNP particle components NOP58 and FBL and with RUVBL1/TIP49. Interacts with RPAP3 and DNAAF10. Interacts with histone H4 and with SWI/SNF complex member SMARCB1/SNF5. Interacts with the mTORC1 complex member RPTOR. Interacts with MSL1.

The protein localises to the nucleus. In terms of biological role, involved in the assembly of C/D box small nucleolar ribonucleoprotein (snoRNP) particles. Recruits the SWI/SNF complex to the core promoter of rRNA genes and enhances pre-rRNA transcription. Mediates interaction of TELO2 with the R2TP complex which is necessary for the stability of MTOR and SMG1. Positively regulates the assembly and activity of the mTORC1 complex. The chain is PIH1 domain-containing protein 1 (Pih1d1) from Rattus norvegicus (Rat).